Consider the following 491-residue polypeptide: UDP-N-acetylmuramate--L-alanine ligase (491 aa).

G126–T132 provides a ligand contact to ATP.

This sequence belongs to the MurCDEF family.

Its subcellular location is the cytoplasm. It carries out the reaction UDP-N-acetyl-alpha-D-muramate + L-alanine + ATP = UDP-N-acetyl-alpha-D-muramoyl-L-alanine + ADP + phosphate + H(+). The protein operates within cell wall biogenesis; peptidoglycan biosynthesis. In terms of biological role, cell wall formation. This is UDP-N-acetylmuramate--L-alanine ligase from Salmonella agona (strain SL483).